The chain runs to 236 residues: Envelope glycoprotein (236 aa).

Over 1-202 (CQFDGNTISG…EWILGVLNGN (202 aa)) the chain is Lumenal. N-linked (GlcNAc...) asparagine; by host glycosylation occurs at N25. 5 disulfide bridges follow: C67–C97, C90–C142, C107–C112, C143–C148, and C182–C186. Residues 203 to 223 (WMVVAVLIALLILSILLFTLC) form a helical membrane-spanning segment. Binding to the ribonucleoprotein stretches follow at residues 219-231 (LFTL…PSYR) and 219-236 (LFTL…EHKP). At 224–236 (CPRRPSYRKEHKP) the chain is on the cytoplasmic side.

Belongs to the hantavirus envelope glycoprotein family. In terms of assembly, homodimer. Homotetramer; forms heterotetrameric Gn-Gc spikes in the pre-fusion conformation. Homotrimer; forms homotrimer in the post-fusion conformation at acidic pH. Interacts (via C-terminus) with the nucleoprotein. Post-translationally, envelope polyprotein precursor is quickly cleaved in vivo just after synthesis, presumably by host signal peptidase.

It is found in the virion membrane. Its subcellular location is the host cell surface. It localises to the host Golgi apparatus membrane. The protein localises to the host endoplasmic reticulum membrane. In terms of biological role, forms homotetramers with glycoprotein N at the surface of the virion. Attaches the virion to host cell receptors including integrin ITGAV/ITGB3. This attachment induces virion internalization predominantly through clathrin-dependent endocytosis. Class II fusion protein that promotes fusion of viral membrane with host endosomal membrane after endocytosis of the virion. The protein is Envelope glycoprotein (GP) of Homo sapiens (Human).